The sequence spans 63 residues: Large ribosomal subunit protein bL28 (63 aa).

Belongs to the bacterial ribosomal protein bL28 family.

In Geotalea daltonii (strain DSM 22248 / JCM 15807 / FRC-32) (Geobacter daltonii), this protein is Large ribosomal subunit protein bL28.